The sequence spans 231 residues: Ribosyldihydronicotinamide dehydrogenase [quinone] (231 aa).

FAD-binding positions include His-12 and 18 to 21; that span reads FNGS. The residue at position 80 (Ser-80) is a Phosphoserine. Position 104 to 107 (104 to 107) interacts with FAD; the sequence is LYWF. 127-129 is a substrate binding site; it reads FDI. Residues 148–151 and Tyr-156 contribute to the FAD site; that span reads TTGG. Positions 174 and 178 each coordinate Zn(2+). Glu-194 is a binding site for FAD. The residue at position 197 (Ser-197) is a Phosphoserine. Residue Arg-201 coordinates FAD. Zn(2+) is bound at residue Cys-223.

Belongs to the NAD(P)H dehydrogenase (quinone) family. As to quaternary structure, homodimer. Zn(2+) serves as cofactor. FAD is required as a cofactor.

It localises to the cytoplasm. It catalyses the reaction 1-(beta-D-ribofuranosyl)-1,4-dihydronicotinamide + a quinone + H(+) = beta-nicotinamide D-riboside + a quinol. Its function is as follows. The enzyme apparently serves as a quinone reductase in connection with conjugation reactions of hydroquinones involved in detoxification pathways as well as in biosynthetic processes such as the vitamin K-dependent gamma-carboxylation of glutamate residues in prothrombin synthesis. This chain is Ribosyldihydronicotinamide dehydrogenase [quinone] (NQO2), found in Pongo abelii (Sumatran orangutan).